Consider the following 520-residue polypeptide: GMP synthase [glutamine-hydrolyzing] (520 aa).

The Glutamine amidotransferase type-1 domain maps to Lys13–Asp205. The active-site Nucleophile is the Cys90. Active-site residues include His179 and Glu181. The GMPS ATP-PPase domain maps to Trp206–Arg395. Ser233–Ser239 contributes to the ATP binding site.

As to quaternary structure, homodimer.

The enzyme catalyses XMP + L-glutamine + ATP + H2O = GMP + L-glutamate + AMP + diphosphate + 2 H(+). It participates in purine metabolism; GMP biosynthesis; GMP from XMP (L-Gln route): step 1/1. Its function is as follows. Catalyzes the synthesis of GMP from XMP. This Streptococcus pneumoniae serotype 2 (strain D39 / NCTC 7466) protein is GMP synthase [glutamine-hydrolyzing].